The following is a 192-amino-acid chain: ATP synthase protein MI25 (192 aa).

Residues 29–49 traverse the membrane as a helical segment; that stretch reads ILIYNEEMIVALCFIGFIIFS.

Belongs to the ATPase protein MI25 family. In terms of assembly, F-type ATPases have 2 components, CF(1) - the catalytic core - and CF(0) - the membrane proton channel. CF(1) has five subunits: alpha(3), beta(3), gamma(1), delta(1), epsilon(1). CF(0) has three main subunits: a, b and c.

It localises to the mitochondrion membrane. Its function is as follows. This is one of the chains of the nonenzymatic component (CF(0) subunit) of the mitochondrial ATPase complex. The polypeptide is ATP synthase protein MI25 (ATP4) (Arabidopsis thaliana (Mouse-ear cress)).